The following is a 95-amino-acid chain: Probable FAD-linked sulfhydryl oxidase OPG072 (95 aa).

Residues 1-8 (MNPKHWGR) lie on the Intravirion side of the membrane. The ERV/ALR sulfhydryl oxidase domain occupies 1–95 (MNPKHWGRAV…AIDVSKVKPL (95 aa)). A helical transmembrane segment spans residues 9-25 (AVWTIIFIVLSQAGLDG). At 26 to 95 (NIEACKRKLY…AIDVSKVKPL (70 aa)) the chain is on the virion surface side. Cysteine 43 and cysteine 46 form a disulfide bridge.

This sequence belongs to the orthopoxvirus OPG072 family. As to quaternary structure, interacts with OPG128; this interaction involves formation of a transient disulfide-bonded intermediate, allowing disulfide bond transfer. Requires FAD as cofactor.

It localises to the virion membrane. The protein localises to the host cytoplasm. The catalysed reaction is 2 R'C(R)SH + O2 = R'C(R)S-S(R)CR' + H2O2. Functionally, FAD-dependent sulfhydryl oxidase that catalyzes disulfide bond formation. The complete pathway for formation of disulfide bonds in intracellular virion membrane proteins sequentially involves thiol-disulfide transfer between OPG072, OPG128 and OPG088. The chain is Probable FAD-linked sulfhydryl oxidase OPG072 (OPG072) from Monkeypox virus.